The chain runs to 259 residues: Ribonuclease HII (259 aa).

The RNase H type-2 domain occupies Thr70–Glu258. Positions 76, 77, and 168 each coordinate a divalent metal cation.

It belongs to the RNase HII family. The cofactor is Mn(2+). It depends on Mg(2+) as a cofactor.

It localises to the cytoplasm. The catalysed reaction is Endonucleolytic cleavage to 5'-phosphomonoester.. Endonuclease that specifically degrades the RNA of RNA-DNA hybrids. The polypeptide is Ribonuclease HII (Streptococcus pneumoniae serotype 2 (strain D39 / NCTC 7466)).